The chain runs to 279 residues: uncharacterized protein (279 aa).

The protein to M.tuberculosis Rv2569c.

This is an uncharacterized protein from Mycobacterium leprae (strain TN).